Consider the following 179-residue polypeptide: Large ribosomal subunit protein uL5 (179 aa).

This sequence belongs to the universal ribosomal protein uL5 family. As to quaternary structure, part of the 50S ribosomal subunit; part of the 5S rRNA/L5/L18/L25 subcomplex. Contacts the 5S rRNA and the P site tRNA. Forms a bridge to the 30S subunit in the 70S ribosome.

Functionally, this is one of the proteins that bind and probably mediate the attachment of the 5S RNA into the large ribosomal subunit, where it forms part of the central protuberance. In the 70S ribosome it contacts protein S13 of the 30S subunit (bridge B1b), connecting the 2 subunits; this bridge is implicated in subunit movement. Contacts the P site tRNA; the 5S rRNA and some of its associated proteins might help stabilize positioning of ribosome-bound tRNAs. The protein is Large ribosomal subunit protein uL5 of Anaplasma marginale (strain Florida).